Here is a 727-residue protein sequence, read N- to C-terminus: Glycerol-3-phosphate dehydrogenase, mitochondrial (727 aa).

The N-terminal 42 residues, 1–42, are a transit peptide targeting the mitochondrion; sequence MAFQKAVKRTVLVCGGALATVLGLSQCSHYRRKQVNLACLKA. 71–99 contributes to the FAD binding site; that stretch reads DILVIGGGATGSGCALDAVTRGLKTALVE. Tyr-601 carries the phosphotyrosine modification. EF-hand domains are found at residues 623–658 and 659–694; these read SDIE…INVK and IDEN…IQKG. Residues Asp-672, Asn-674, Asn-676, Gln-678, and Glu-683 each contribute to the Ca(2+) site.

Belongs to the FAD-dependent glycerol-3-phosphate dehydrogenase family. Requires FAD as cofactor.

Its subcellular location is the mitochondrion. The enzyme catalyses a quinone + sn-glycerol 3-phosphate = dihydroxyacetone phosphate + a quinol. It functions in the pathway polyol metabolism; glycerol degradation via glycerol kinase pathway; glycerone phosphate from sn-glycerol 3-phosphate (aerobic route): step 1/1. Its activity is regulated as follows. Calcium-binding enhance the activity of the enzyme. Calcium-responsive mitochondrial glycerol-3-phosphate dehydrogenase which seems to be a key component of the pancreatic beta-cell glucose-sensing device. This is Glycerol-3-phosphate dehydrogenase, mitochondrial (GPD2) from Mesocricetus auratus (Golden hamster).